Reading from the N-terminus, the 156-residue chain is SsrA-binding protein (156 aa).

It belongs to the SmpB family.

Its subcellular location is the cytoplasm. Functionally, required for rescue of stalled ribosomes mediated by trans-translation. Binds to transfer-messenger RNA (tmRNA), required for stable association of tmRNA with ribosomes. tmRNA and SmpB together mimic tRNA shape, replacing the anticodon stem-loop with SmpB. tmRNA is encoded by the ssrA gene; the 2 termini fold to resemble tRNA(Ala) and it encodes a 'tag peptide', a short internal open reading frame. During trans-translation Ala-aminoacylated tmRNA acts like a tRNA, entering the A-site of stalled ribosomes, displacing the stalled mRNA. The ribosome then switches to translate the ORF on the tmRNA; the nascent peptide is terminated with the 'tag peptide' encoded by the tmRNA and targeted for degradation. The ribosome is freed to recommence translation, which seems to be the essential function of trans-translation. In Bacillus pumilus (strain SAFR-032), this protein is SsrA-binding protein.